We begin with the raw amino-acid sequence, 602 residues long: UvrABC system protein C (602 aa).

The GIY-YIG domain occupies 19–97 (EEPGVYRMIG…IKSLAPRYNI (79 aa)). The region spanning 206-241 (SEVIDDLTARMHAAAERLAFEEAAACRDQVRVLQAV) is the UVR domain.

Belongs to the UvrC family. Interacts with UvrB in an incision complex.

Its subcellular location is the cytoplasm. Functionally, the UvrABC repair system catalyzes the recognition and processing of DNA lesions. UvrC both incises the 5' and 3' sides of the lesion. The N-terminal half is responsible for the 3' incision and the C-terminal half is responsible for the 5' incision. The sequence is that of UvrABC system protein C from Aromatoleum aromaticum (strain DSM 19018 / LMG 30748 / EbN1) (Azoarcus sp. (strain EbN1)).